Here is a 279-residue protein sequence, read N- to C-terminus: MAIRKLAPVTPGSRFMSYPVFDEITKSKPEKSLLEPLTKSGGRNSAGRKTSRHRGGGHKRHYRIIDFKRNKDGIVATVAAIEYDPNRSARIALLHYIDGEKRYILAPKGLKVGDKVESGEKVEIKTGNTMPMKNIPLGTDIHNIEMKAGKGGQIVRSAGAFAVLAAREGDYVTLKLPSGEIRKVRVECRATIGVIGNADHENIDLGKAGRSRWLGIRPQTRGMAMNPVDHPMGGGEGKSKSGGGRKHPKSPWGQLAKGLKTRNRKKASQKLIVRGRNAK.

2 disordered regions span residues 31-61 (KSLL…HKRH) and 222-279 (GMAM…RNAK). Residues 49–61 (KTSRHRGGGHKRH) show a composition bias toward basic residues. Gly residues predominate over residues 232 to 242 (MGGGEGKSKSG). Residues 259 to 268 (LKTRNRKKAS) show a composition bias toward basic residues.

Belongs to the universal ribosomal protein uL2 family. Part of the 50S ribosomal subunit. Forms a bridge to the 30S subunit in the 70S ribosome.

One of the primary rRNA binding proteins. Required for association of the 30S and 50S subunits to form the 70S ribosome, for tRNA binding and peptide bond formation. It has been suggested to have peptidyltransferase activity; this is somewhat controversial. Makes several contacts with the 16S rRNA in the 70S ribosome. In Chlorobium chlorochromatii (strain CaD3), this protein is Large ribosomal subunit protein uL2.